The sequence spans 323 residues: Acetyl-coenzyme A carboxylase carboxyl transferase subunit alpha (323 aa).

One can recognise a CoA carboxyltransferase C-terminal domain in the interval 39 to 293 (RLAGKSQQLT…KRSLAESLRQ (255 aa)).

Belongs to the AccA family. Acetyl-CoA carboxylase is a heterohexamer composed of biotin carboxyl carrier protein (AccB), biotin carboxylase (AccC) and two subunits each of ACCase subunit alpha (AccA) and ACCase subunit beta (AccD).

It is found in the cytoplasm. It carries out the reaction N(6)-carboxybiotinyl-L-lysyl-[protein] + acetyl-CoA = N(6)-biotinyl-L-lysyl-[protein] + malonyl-CoA. It functions in the pathway lipid metabolism; malonyl-CoA biosynthesis; malonyl-CoA from acetyl-CoA: step 1/1. Functionally, component of the acetyl coenzyme A carboxylase (ACC) complex. First, biotin carboxylase catalyzes the carboxylation of biotin on its carrier protein (BCCP) and then the CO(2) group is transferred by the carboxyltransferase to acetyl-CoA to form malonyl-CoA. The sequence is that of Acetyl-coenzyme A carboxylase carboxyl transferase subunit alpha from Cupriavidus pinatubonensis (strain JMP 134 / LMG 1197) (Cupriavidus necator (strain JMP 134)).